Consider the following 257-residue polypeptide: Uracil phosphoribosyltransferase homolog (257 aa).

GTP is bound by residues Arg81, Arg90, and 124 to 127 (EKGN). Arg134 lines the 5-phospho-alpha-D-ribose 1-diphosphate pocket. Residues Arg151 and Arg180 each coordinate GTP. Residue 186-194 (YPILSTGNT) coordinates 5-phospho-alpha-D-ribose 1-diphosphate. Uracil is bound at residue 247–249 (THF).

The protein belongs to the UPRTase family.

Its subcellular location is the cytoplasm. It localises to the nucleus. This is Uracil phosphoribosyltransferase homolog (uprt) from Danio rerio (Zebrafish).